Reading from the N-terminus, the 137-residue chain is Large ribosomal subunit protein uL16 (137 aa).

Belongs to the universal ribosomal protein uL16 family. As to quaternary structure, part of the 50S ribosomal subunit.

Binds 23S rRNA and is also seen to make contacts with the A and possibly P site tRNAs. The protein is Large ribosomal subunit protein uL16 of Alcanivorax borkumensis (strain ATCC 700651 / DSM 11573 / NCIMB 13689 / SK2).